The following is a 357-amino-acid chain: D(4) dopamine receptor (357 aa).

The Extracellular segment spans residues 1-32 (MGNRSAADADGLLAGRGPGTGGGAGSPGAAAA). N-linked (GlcNAc...) asparagine glycosylation is present at Asn3. Residues 33-55 (LVGGVLLIGAVLAGNALVCVSVA) form a helical membrane-spanning segment. The Cytoplasmic segment spans residues 56 to 65 (AERALQTPTN). Residues 66-88 (YFIVSLAAADLLLALLVLPLFVY) traverse the membrane as a helical segment. Asp75 lines the Na(+) pocket. Topologically, residues 89–104 (SEVQGGVWQFSPGLCD) are extracellular. Residues Cys103 and Cys180 are joined by a disulfide bond. Residues 105–126 (ALMAMDVMLCTASIFNLCAISA) form a helical membrane-spanning segment. Ser117 provides a ligand contact to Na(+). The Cytoplasmic segment spans residues 127–146 (DRFVAVAVPLSYNRQSGGGR). A helical transmembrane segment spans residues 147-170 (QLLLIGATWLLSAAVAAPVLCGLN). Residues 171–186 (DARGRDPAVCRLEDRD) lie on the Extracellular side of the membrane. The helical transmembrane segment at 187-208 (YVVYSSVCSFFLPCPVMLLLYW) threads the bilayer. The Cytoplasmic portion of the chain corresponds to 209–284 (ATFRGLRRWE…ITGRERKAMR (76 aa)). The interval 225 to 261 (LHGRRPRRPSGPGPPPPEAVETPEAPEAIPTPDATLA) is disordered. Over residues 233–242 (PSGPGPPPPE) the composition is skewed to pro residues. The segment covering 243 to 259 (AVETPEAPEAIPTPDAT) has biased composition (low complexity). A helical membrane pass occupies residues 285 to 307 (VLPVVVGAFLVCWTPFFVVHITG). At 308-316 (ALCPACAVP) the chain is on the extracellular side. Cys310 and Cys313 are oxidised to a cystine. A helical membrane pass occupies residues 317–339 (PRLVSAVTWLGYVNSALNPLIYT). At 340–357 (VFNAEFRAVFRKALRLCC) the chain is on the cytoplasmic side. The S-palmitoyl cysteine moiety is linked to residue Cys357.

The protein belongs to the G-protein coupled receptor 1 family. Forms homo- and heterooligomers with DRD2. D4.7 allele exhibits higher affinity for homodimers compared to DRD2 heterodimers, while alleles D42. and 4.4 have similar affinities for both. The interaction with DRD2 may modulate agonist-induced downstream signaling. Interacts with CLIC6. Interacts with GPRASP1. May interact with ADORA2A. Interacts with KLHL12. Polyubiquitinated by the BCR(KLHL12) E3 ubiquitin ligase complex: polyubiquitination does not lead to degradation of DRD4 protein. In terms of processing, palmitoylated. Palmitoylation of the C-terminal Cys is important for normal expression at the cell membrane.

It localises to the cell membrane. Its function is as follows. Dopamine receptor responsible for neuronal signaling in the mesolimbic system of the brain, an area of the brain that regulates emotion and complex behavior. Activated by dopamine, but also by epinephrine and norepinephrine, and by numerous synthetic agonists and drugs. Agonist binding triggers signaling via G proteins that inhibit adenylyl cyclase. Modulates the circadian rhythm of contrast sensitivity by regulating the rhythmic expression of NPAS2 in the retinal ganglion cells. In Mustela putorius furo (European domestic ferret), this protein is D(4) dopamine receptor (DRD4).